The following is a 254-amino-acid chain: Protein orai-2 (254 aa).

The next 4 membrane-spanning stretches (helical) occupy residues threonine 66–leucine 83, leucine 94–isoleucine 114, leucine 148–leucine 168, and alanine 196–isoleucine 216.

Belongs to the Orai family. In terms of assembly, oligomerizes in homomeric and heteromeric ORAI complexes. Native CRAC channels most likely consist of hexameric ORAI heteromers, implying that diverse ORAI1, ORAI2 and ORAI3 subunit combinations with distinct biophysical properties can operate in a cell-type specific way. Interacts with STIM1; this regulates channel activity. Interacts with CRACR2A/EFCAB4B.

The protein resides in the cell membrane. It carries out the reaction Ca(2+)(in) = Ca(2+)(out). CRAC channels are regulated by fast Ca(2+)-dependent inactivation (FCDI), a mechanism that limits Ca(2+) influx and cell toxicity. ORAI2 channels display prominent FCDI. Inhibited by lanthanides such as Gd(3+) ions. Functionally, pore-forming subunit of inward rectifying Ca(2+) release-activated Ca(2+) (CRAC) channels. Assembles with ORAI1 and ORAI3 to form hexameric CRAC channels that mediate Ca(2+) influx upon depletion of endoplasmic reticulum Ca(2+) store and channel activation by Ca(2+) sensor STIM1, a process known as store-operated Ca(2+) entry (SOCE). Various pore subunit combinations may account for distinct CRAC channel spatiotemporal and cell-type specific dynamics. ORAI1 mainly contributes to the generation of Ca(2+) plateaus involved in sustained Ca(2+) entry and is dispensable for cytosolic Ca(2+) oscillations, whereas ORAI2 and ORAI3 generate oscillatory patterns. CRAC channels assemble in Ca(2+) signaling microdomains where Ca(2+) influx is coupled to calmodulin and calcineurin signaling and activation of NFAT transcription factors recruited to ORAI1 via AKAP5. CRAC channels are the main pathway for Ca(2+) influx in T cells and promote the immune response to pathogens by activating NFAT-dependent cytokine and chemokine transcription. This chain is Protein orai-2 (ORAI2), found in Homo sapiens (Human).